A 355-amino-acid polypeptide reads, in one-letter code: UDP-N-acetylglucosamine--N-acetylmuramyl-(pentapeptide) pyrophosphoryl-undecaprenol N-acetylglucosamine transferase (355 aa).

UDP-N-acetyl-alpha-D-glucosamine contacts are provided by residues 14-16, N126, R162, S190, I243, 262-267, and Q287; these read TGG and ALTVSE.

The protein belongs to the glycosyltransferase 28 family. MurG subfamily.

It is found in the cell inner membrane. It catalyses the reaction di-trans,octa-cis-undecaprenyl diphospho-N-acetyl-alpha-D-muramoyl-L-alanyl-D-glutamyl-meso-2,6-diaminopimeloyl-D-alanyl-D-alanine + UDP-N-acetyl-alpha-D-glucosamine = di-trans,octa-cis-undecaprenyl diphospho-[N-acetyl-alpha-D-glucosaminyl-(1-&gt;4)]-N-acetyl-alpha-D-muramoyl-L-alanyl-D-glutamyl-meso-2,6-diaminopimeloyl-D-alanyl-D-alanine + UDP + H(+). The protein operates within cell wall biogenesis; peptidoglycan biosynthesis. Functionally, cell wall formation. Catalyzes the transfer of a GlcNAc subunit on undecaprenyl-pyrophosphoryl-MurNAc-pentapeptide (lipid intermediate I) to form undecaprenyl-pyrophosphoryl-MurNAc-(pentapeptide)GlcNAc (lipid intermediate II). In Vibrio campbellii (strain ATCC BAA-1116), this protein is UDP-N-acetylglucosamine--N-acetylmuramyl-(pentapeptide) pyrophosphoryl-undecaprenol N-acetylglucosamine transferase.